Reading from the N-terminus, the 234-residue chain is ATP synthase subunit a 1 (234 aa).

The next 5 helical transmembrane spans lie at 20 to 40 (ETVV…ILLT), 76 to 96 (LLPL…LGVI), 105 to 125 (DLSV…AYGV), 162 to 184 (LFGN…GFLA), and 195 to 215 (EALV…AGAM).

It belongs to the ATPase A chain family. In terms of assembly, F-type ATPases have 2 components, CF(1) - the catalytic core - and CF(0) - the membrane proton channel. CF(1) has five subunits: alpha(3), beta(3), gamma(1), delta(1), epsilon(1). CF(0) has three main subunits: a(1), b(2) and c(9-12). The alpha and beta chains form an alternating ring which encloses part of the gamma chain. CF(1) is attached to CF(0) by a central stalk formed by the gamma and epsilon chains, while a peripheral stalk is formed by the delta and b chains.

It localises to the cell inner membrane. In terms of biological role, key component of the proton channel; it plays a direct role in the translocation of protons across the membrane. The sequence is that of ATP synthase subunit a 1 from Hahella chejuensis (strain KCTC 2396).